We begin with the raw amino-acid sequence, 265 residues long: Glutamate racemase (265 aa).

Substrate contacts are provided by residues 7 to 8 and 39 to 40; these read DS and YG. The active-site Proton donor/acceptor is the C71. A substrate-binding site is contributed by 72–73; the sequence is NT. C184 acts as the Proton donor/acceptor in catalysis. Position 185-186 (185-186) interacts with substrate; the sequence is TH.

Belongs to the aspartate/glutamate racemases family.

The enzyme catalyses L-glutamate = D-glutamate. The protein operates within cell wall biogenesis; peptidoglycan biosynthesis. Provides the (R)-glutamate required for cell wall biosynthesis. The chain is Glutamate racemase from Sulfurovum sp. (strain NBC37-1).